Consider the following 426-residue polypeptide: Serine--tRNA ligase (426 aa).

Thr-233–Glu-235 is an L-serine binding site. Arg-264–Glu-266 is a binding site for ATP. Position 287 (Glu-287) interacts with L-serine. An ATP-binding site is contributed by Glu-351–Ser-354. An L-serine-binding site is contributed by Ser-387.

It belongs to the class-II aminoacyl-tRNA synthetase family. Type-1 seryl-tRNA synthetase subfamily. In terms of assembly, homodimer. The tRNA molecule binds across the dimer.

The protein resides in the cytoplasm. It carries out the reaction tRNA(Ser) + L-serine + ATP = L-seryl-tRNA(Ser) + AMP + diphosphate + H(+). The enzyme catalyses tRNA(Sec) + L-serine + ATP = L-seryl-tRNA(Sec) + AMP + diphosphate + H(+). Its pathway is aminoacyl-tRNA biosynthesis; selenocysteinyl-tRNA(Sec) biosynthesis; L-seryl-tRNA(Sec) from L-serine and tRNA(Sec): step 1/1. In terms of biological role, catalyzes the attachment of serine to tRNA(Ser). Is also able to aminoacylate tRNA(Sec) with serine, to form the misacylated tRNA L-seryl-tRNA(Sec), which will be further converted into selenocysteinyl-tRNA(Sec). The sequence is that of Serine--tRNA ligase from Clostridium tetani (strain Massachusetts / E88).